Here is a 115-residue protein sequence, read N- to C-terminus: DNA-binding protein NP_4416A (115 aa).

Acidic residues predominate over residues 1–11 (MSGEPTDEDLE). The segment at 1–46 (MSGEPTDEDLEELRKKKMEQLKEQGGEGQSEAAEAQRQQAEAQKKA) is disordered. Basic and acidic residues predominate over residues 12 to 25 (ELRKKKMEQLKEQG). Residues 29–41 (QSEAAEAQRQQAE) show a composition bias toward low complexity.

It belongs to the PDCD5 family.

This Natronomonas pharaonis (strain ATCC 35678 / DSM 2160 / CIP 103997 / JCM 8858 / NBRC 14720 / NCIMB 2260 / Gabara) (Halobacterium pharaonis) protein is DNA-binding protein NP_4416A.